The chain runs to 313 residues: MAEASPQPGRYFCHCCSVEIVPRLPDYICPRCESGFIEELPEETRNTENGSAPSTAPTDQNRQPFENVDQHLFTLPQGYSQFAFGIFDDSFEIPTFPPGAQADDGRDPESRREREHQSRHRYGARQPRARLTARRATGRHEGVPTLEGIIQQLVNGIISPAAVPSLGLGPWGVLHSNPMDYAWGANGLDTIITQLLNQFENTGPPPADKEKIQALPTVPVTEEHVGSGLECPVCKEDYALGESVRQLPCNHLFHDSCIVPWLEQHDSCPVCRKSLTGQNTATNPPGLTGVGFSSSSSSSSSSSPSNENATSNS.

Residue Ala2 is modified to N-acetylalanine. Ser5 is modified (phosphoserine). The tract at residues 5 to 100 (SPQPGRYFCH…FEIPTFPPGA (96 aa)) is required for interaction with BAG6. Positions 13, 16, 29, and 32 each coordinate Zn(2+). A C4-type zinc finger spans residues 13-32 (CHCCSVEIVPRLPDYICPRC). 2 disordered regions span residues 42-63 (EETR…QNRQ) and 95-128 (TFPP…RQPR). The segment covering 47–63 (TENGSAPSTAPTDQNRQ) has biased composition (polar residues). Positions 103-116 (DDGRDPESRREREH) are enriched in basic and acidic residues. A compositionally biased stretch (basic residues) spans 117–128 (QSRHRYGARQPR). Residues 202-306 (TGPPPADKEK…SSSSSSSPSN (105 aa)) form a sufficient for interaction with AICDA region. The RING-type zinc finger occupies 231–272 (CPVCKEDYALGESVRQLPCNHLFHDSCIVPWLEQHDSCPVCR). The disordered stretch occupies residues 279 to 313 (NTATNPPGLTGVGFSSSSSSSSSSSPSNENATSNS). Residues 293-313 (SSSSSSSSSSSPSNENATSNS) are compositionally biased toward low complexity.

In terms of assembly, interacts with CCDC50, EGFR, FLT3 and SCAMP3. Interacts with BAG6 (via ubiquitin-like domain); required for BAG6-dependent ubiquitination of proteins mislocalized to the cytosol. Interacts with CDKN1A. Interacts with AICDA. Ubiquitinated. May undergo autoubiquitination. Detected in B-cells (at protein level).

The protein resides in the cytoplasm. It is found in the nucleus. The catalysed reaction is S-ubiquitinyl-[E2 ubiquitin-conjugating enzyme]-L-cysteine + [acceptor protein]-L-lysine = [E2 ubiquitin-conjugating enzyme]-L-cysteine + N(6)-ubiquitinyl-[acceptor protein]-L-lysine.. It participates in protein modification; protein ubiquitination. E3 ubiquitin-protein ligase that mediates ubiquitination oF target proteins. Depending on the associated E2 ligase, mediates 'Lys-27'-, 'Lys-29'-, 'Lys-48'- and/or 'Lys-63'-linked polyubiquitination of substrates. Part of a BAG6-dependent quality control process ensuring that proteins of the secretory pathway that are mislocalized to the cytosol are degraded by the proteasome. Probably acts by providing the ubiquitin ligase activity associated with the BAG6 complex and be responsible for ubiquitination of the hydrophobic mislocalized proteins and their targeting to the proteasome. May also play a role in the endosomal recycling of IGF2R, the cation-independent mannose-6-phosphate receptor. May play a role in the endosomal sorting and degradation of several membrane receptors including EGFR, FLT3, MET and CXCR4, by mediating their ubiquitination. By ubiquitinating CDKN1A/p21 and targeting it for degradation, may also promote cell proliferation. May monoubiquitinate AICDA. Acts as a regulator of DNA repair by mediating 'Lys-27'- and 'Lys-29'-linked polyubiquitination of MRE11, thereby promoting the exonuclease activity of MRE11. The sequence is that of E3 ubiquitin-protein ligase RNF126 from Mus musculus (Mouse).